Consider the following 574-residue polypeptide: MSNGLIILIIVIAVALILAYVAAVVLRKRNETLLDSLEERKEKLYNLPVNDEVEAIKNMHLIGQSQVTFREWNQKWVDLSLNSFADIENNIFEAEGYNNSFRFLKAKHAIDSIESQINLVEEDIELIREALADLEKQEAKNSGRVLHALELFENLQVKVAEDTEKYGPAVQEIQKQLQNIESEFSQFVTLNSSGDPVEAADILDKTENHILALTHIVDKVPSIVTELREVLPDQLEDLESGYRKLVEAGYHFVETDIESRFSQLHSNITQNYENIAALELDNAQYENTQIQEEINALYDIFTREIAAQKVVEKLQENLPAYLKHTKENNQHLQSELDRLSKMYLLSDEEDEKVRDLQSELSALEAVVLATVEDSAENKQAYSLTQEALEATQERLKEIEDEQITLGERLERIEKDDDNARQKVNIYINKLHTIKRYMEKRNLPGIPKSFLSLFFTASDHTEALLTELEQLRVNIDNVNLLLENVTNDIHDLETETYQIVQYATLTEQLLQYSNRYRSFDQSIQEAFNKALDIFENQFDYESSFEVISQALEVVEPGVTSRFVTSYEKTRENIRF.

At 1 to 7 the chain is on the extracellular side; that stretch reads MSNGLII. The helical transmembrane segment at 8–26 threads the bilayer; that stretch reads LIIVIAVALILAYVAAVVL. Over 27–574 the chain is Cytoplasmic; that stretch reads RKRNETLLDS…YEKTRENIRF (548 aa). 3 coiled-coil regions span residues 104-141, 267-424, and 456-524; these read LKAKHAIDSIESQINLVEEDIELIREALADLEKQEAKN, NITQ…QKVN, and ASDH…SIQE.

The protein belongs to the EzrA family.

The protein resides in the cell membrane. Its function is as follows. Negative regulator of FtsZ ring formation; modulates the frequency and position of FtsZ ring formation. Inhibits FtsZ ring formation at polar sites. Interacts either with FtsZ or with one of its binding partners to promote depolymerization. This is Septation ring formation regulator EzrA from Streptococcus gordonii (strain Challis / ATCC 35105 / BCRC 15272 / CH1 / DL1 / V288).